Reading from the N-terminus, the 345-residue chain is uncharacterized protein (345 aa).

This is an uncharacterized protein from Saccharomyces cerevisiae (strain ATCC 204508 / S288c) (Baker's yeast).